The chain runs to 112 residues: Large ribosomal subunit protein bL17 (112 aa).

It belongs to the bacterial ribosomal protein bL17 family. Part of the 50S ribosomal subunit. Contacts protein L32.

The sequence is that of Large ribosomal subunit protein bL17 from Carboxydothermus hydrogenoformans (strain ATCC BAA-161 / DSM 6008 / Z-2901).